The sequence spans 417 residues: Serine hydroxymethyltransferase (417 aa).

(6S)-5,6,7,8-tetrahydrofolate is bound by residues L121 and 125–127; that span reads GHL. K229 carries the post-translational modification N6-(pyridoxal phosphate)lysine. 354-356 provides a ligand contact to (6S)-5,6,7,8-tetrahydrofolate; it reads SPF.

It belongs to the SHMT family. As to quaternary structure, homodimer. Pyridoxal 5'-phosphate serves as cofactor.

The protein localises to the cytoplasm. The enzyme catalyses (6R)-5,10-methylene-5,6,7,8-tetrahydrofolate + glycine + H2O = (6S)-5,6,7,8-tetrahydrofolate + L-serine. Its pathway is one-carbon metabolism; tetrahydrofolate interconversion. The protein operates within amino-acid biosynthesis; glycine biosynthesis; glycine from L-serine: step 1/1. Catalyzes the reversible interconversion of serine and glycine with tetrahydrofolate (THF) serving as the one-carbon carrier. This reaction serves as the major source of one-carbon groups required for the biosynthesis of purines, thymidylate, methionine, and other important biomolecules. Also exhibits THF-independent aldolase activity toward beta-hydroxyamino acids, producing glycine and aldehydes, via a retro-aldol mechanism. This is Serine hydroxymethyltransferase from Stutzerimonas stutzeri (strain A1501) (Pseudomonas stutzeri).